Consider the following 441-residue polypeptide: ATP-dependent RNA helicase RhlB (441 aa).

Positions 9–37 match the Q motif motif; sequence QKFADFSLNKEIKTALNESGFEFCTPIQA. Residues 40–219 enclose the Helicase ATP-binding domain; sequence LPILLQKKDI…YDHMNEPEKV (180 aa). 53–60 serves as a coordination point for ATP; sequence AQTGTGKT. The short motif at 165-168 is the DEAD box element; it reads DEAD. Residues 243 to 390 enclose the Helicase C-terminal domain; sequence KMRLLLSLIE…VTNYDSEGLL (148 aa). Residues 401–441 form a disordered region; it reads RKHNNRPQQGRNNSGRPQGRNGNRAGGRNGPRRHDQVRRHS.

Belongs to the DEAD box helicase family. RhlB subfamily. In terms of assembly, component of the RNA degradosome, which is a multiprotein complex involved in RNA processing and mRNA degradation.

It localises to the cytoplasm. The enzyme catalyses ATP + H2O = ADP + phosphate + H(+). Functionally, DEAD-box RNA helicase involved in RNA degradation. Has RNA-dependent ATPase activity and unwinds double-stranded RNA. This Shewanella woodyi (strain ATCC 51908 / MS32) protein is ATP-dependent RNA helicase RhlB.